A 377-amino-acid chain; its full sequence is Probable glucokinase 2 (377 aa).

27–32 (CDVGGS) lines the ATP pocket.

The protein belongs to the bacterial glucokinase family.

The enzyme catalyses D-glucose + ATP = D-glucose 6-phosphate + ADP + H(+). This is Probable glucokinase 2 (GK2) from Trichomonas vaginalis.